The primary structure comprises 226 residues: MNIILKISGKFFDEDNVNNLIVLRESIRELTDNGFRVGIVTGGGSTARRYIKLAREIGIGEAYLDLLGIWASRLNAYLVMFSLQDLAYMHVPQSLEEFIQDWSHGKVVVTGGFQPGQSTAAVAALVAEASSSKTLVVATNVDGVYEKDPRVYTDVKLIPHLTTQDLRKILEGSQSVQAGTYELLDPLAIKIVERSKIRVVVMNYRKLNRIINILKGEEVSSIIEPT.

Residue 6 to 10 (KISGK) participates in ATP binding. Gly43 lines the UMP pocket. Positions 44 and 48 each coordinate ATP. Residues Asp65 and 113–119 (FQPGQST) contribute to the UMP site. Thr139, Asn140, Tyr145, and Asp148 together coordinate ATP.

It belongs to the UMP kinase family. Homohexamer.

It is found in the cytoplasm. The enzyme catalyses UMP + ATP = UDP + ADP. The protein operates within pyrimidine metabolism; CTP biosynthesis via de novo pathway; UDP from UMP (UMPK route): step 1/1. Inhibited by UTP. Functionally, catalyzes the reversible phosphorylation of UMP to UDP. This chain is Uridylate kinase, found in Saccharolobus islandicus (strain Y.N.15.51 / Yellowstone #2) (Sulfolobus islandicus).